Reading from the N-terminus, the 647-residue chain is Nucleoside triphosphatase I (647 aa).

Residues Phe48–Lys213 form the Helicase ATP-binding domain. Trp61–Thr68 is an ATP binding site. A DEXH box motif is present at residues Asp150–His153. Residues Tyr377 to Lys540 form the Helicase C-terminal domain. The interval Asp466–Ile532 is binding to the cap-specific mRNA (nucleoside-2'-O-)-methyltransferase.

This sequence belongs to the helicase family. NPH I subfamily. Monomer. Interacts (via C-terminus) with RAP94 (via N-terminus). Interacts with the cap-specific mRNA (nucleoside-2'-O-)-methyltransferase.

It localises to the virion. The catalysed reaction is a ribonucleoside 5'-triphosphate + H2O = a ribonucleoside 5'-diphosphate + phosphate + H(+). In terms of biological role, DNA-dependent ATPase required for providing the needed energy to achieve the termination of early transcripts. Acts in concert with the RAP94 subunit of the virion RNA polymerase and the capping enzyme/VTF to catalyze release of UUUUUNU-containing nascent RNA from the elongation complex. NPH-I must bind ssDNA in order to exhibit ATPase activity. The polypeptide is Nucleoside triphosphatase I (NPH1) (Melanoplus sanguinipes entomopoxvirus (MsEPV)).